Here is a 343-residue protein sequence, read N- to C-terminus: Cilia- and flagella-associated protein 36 (343 aa).

Phosphoserine occurs at positions 85 and 147. The stretch at 147–187 (SDLEQEEMKILREVLRKSKEEYDQEEERKRKKQSSEAKMEE) forms a coiled coil. Residues 165–188 (KEEYDQEEERKRKKQSSEAKMEEL) form a disordered region. A Phosphoserine modification is found at serine 201. Composition is skewed to basic and acidic residues over residues 279-293 (QKRDKLLSMRKDTRT) and 301-323 (QKGKPTREAEEMTEKPEMTAEEK). Positions 279 to 323 (QKRDKLLSMRKDTRTKQIQNTEQKGKPTREAEEMTEKPEMTAEEK) are disordered.

Belongs to the CFAP36 family. As to quaternary structure, interacts with ARL3.

It is found in the nucleus. The protein resides in the cytoplasm. The protein localises to the cell projection. It localises to the cilium. Its subcellular location is the flagellum. Functionally, may act as an effector for ARL3. The polypeptide is Cilia- and flagella-associated protein 36 (Mus musculus (Mouse)).